Here is a 364-residue protein sequence, read N- to C-terminus: Aminomethyltransferase (364 aa).

Belongs to the GcvT family. In terms of assembly, the glycine cleavage system is composed of four proteins: P, T, L and H.

It carries out the reaction N(6)-[(R)-S(8)-aminomethyldihydrolipoyl]-L-lysyl-[protein] + (6S)-5,6,7,8-tetrahydrofolate = N(6)-[(R)-dihydrolipoyl]-L-lysyl-[protein] + (6R)-5,10-methylene-5,6,7,8-tetrahydrofolate + NH4(+). Its function is as follows. The glycine cleavage system catalyzes the degradation of glycine. The protein is Aminomethyltransferase of Salmonella paratyphi A (strain AKU_12601).